Consider the following 606-residue polypeptide: NADH-ubiquinone oxidoreductase chain 5 (606 aa).

Met1 carries the post-translational modification N-formylmethionine. A run of 15 helical transmembrane segments spans residues 4–24 (FSSL…MMSF), 43–63 (AFIT…ELII), 87–107 (MMFI…SMWY), 117–137 (FFKY…ANNL), 140–160 (LFIG…WWYG), 171–191 (AILY…WFLT), 213–233 (LIGL…HPWL), 241–261 (TPVS…FLLI), 273–293 (IQSI…MCAL), 310–330 (LGLM…LHIC), 366–386 (MPFT…MPFL), 413–433 (LIAT…ALLG), 457–477 (LLIG…PTTI), 482–502 (MPYY…ILAL), and 582–602 (GLIK…MILF).

As to quaternary structure, core subunit of respiratory chain NADH dehydrogenase (Complex I) which is composed of 45 different subunits.

The protein resides in the mitochondrion inner membrane. It carries out the reaction a ubiquinone + NADH + 5 H(+)(in) = a ubiquinol + NAD(+) + 4 H(+)(out). Functionally, core subunit of the mitochondrial membrane respiratory chain NADH dehydrogenase (Complex I) which catalyzes electron transfer from NADH through the respiratory chain, using ubiquinone as an electron acceptor. Essential for the catalytic activity and assembly of complex I. The sequence is that of NADH-ubiquinone oxidoreductase chain 5 (MT-ND5) from Bos taurus (Bovine).